A 23-amino-acid polypeptide reads, in one-letter code: uncharacterized protein (23 aa).

A helical transmembrane segment spans residues 3-23 (YFFMGISFMVIVWAGTFALMI).

It is found in the cell inner membrane. This is an uncharacterized protein from Escherichia coli (strain K12).